A 95-amino-acid chain; its full sequence is Small ribosomal subunit protein uS19 (95 aa).

The segment at 76 to 95 (PTRRFGGHADKKAKKGELKK) is disordered. The segment covering 82–95 (GHADKKAKKGELKK) has biased composition (basic and acidic residues).

It belongs to the universal ribosomal protein uS19 family.

In terms of biological role, protein S19 forms a complex with S13 that binds strongly to the 16S ribosomal RNA. The polypeptide is Small ribosomal subunit protein uS19 (Thermotoga neapolitana (strain ATCC 49049 / DSM 4359 / NBRC 107923 / NS-E)).